Here is a 305-residue protein sequence, read N- to C-terminus: Phosphoribosylaminoimidazole-succinocarboxamide synthase (305 aa).

Belongs to the SAICAR synthetase family.

The catalysed reaction is 5-amino-1-(5-phospho-D-ribosyl)imidazole-4-carboxylate + L-aspartate + ATP = (2S)-2-[5-amino-1-(5-phospho-beta-D-ribosyl)imidazole-4-carboxamido]succinate + ADP + phosphate + 2 H(+). Its pathway is purine metabolism; IMP biosynthesis via de novo pathway; 5-amino-1-(5-phospho-D-ribosyl)imidazole-4-carboxamide from 5-amino-1-(5-phospho-D-ribosyl)imidazole-4-carboxylate: step 1/2. This is Phosphoribosylaminoimidazole-succinocarboxamide synthase from Polaromonas naphthalenivorans (strain CJ2).